Here is a 246-residue protein sequence, read N- to C-terminus: Zinc import ATP-binding protein ZnuC (246 aa).

The region spanning 24 to 243 is the ABC transporter domain; that stretch reads LKIENLALAY…RTLNEIFSSY (220 aa). 56 to 63 provides a ligand contact to ATP; it reads GPNGGGKT.

This sequence belongs to the ABC transporter superfamily. Zinc importer (TC 3.A.1.15.5) family. As to quaternary structure, the complex is composed of two ATP-binding proteins (ZnuC), two transmembrane proteins (ZnuB) and a solute-binding protein (ZnuA).

It is found in the cell membrane. The enzyme catalyses Zn(2+)(out) + ATP(in) + H2O(in) = Zn(2+)(in) + ADP(in) + phosphate(in) + H(+)(in). Functionally, part of the ABC transporter complex ZnuABC involved in zinc import. Responsible for energy coupling to the transport system. The chain is Zinc import ATP-binding protein ZnuC from Wolbachia pipientis wMel.